The chain runs to 139 residues: Transcription antitermination protein NusB (139 aa).

The protein belongs to the NusB family.

Involved in transcription antitermination. Required for transcription of ribosomal RNA (rRNA) genes. Binds specifically to the boxA antiterminator sequence of the ribosomal RNA (rrn) operons. The chain is Transcription antitermination protein NusB from Limosilactobacillus fermentum (strain NBRC 3956 / LMG 18251) (Lactobacillus fermentum).